A 354-amino-acid polypeptide reads, in one-letter code: 3-dehydroquinate synthase (354 aa).

Residues 100–104 (GATGD), 124–125 (TT), Lys136, Lys145, and 163–166 (FLKT) each bind NAD(+). Glu178, His242, and His256 together coordinate Zn(2+).

Belongs to the sugar phosphate cyclases superfamily. Dehydroquinate synthase family. NAD(+) serves as cofactor. The cofactor is Co(2+). Zn(2+) is required as a cofactor.

It localises to the cytoplasm. It catalyses the reaction 7-phospho-2-dehydro-3-deoxy-D-arabino-heptonate = 3-dehydroquinate + phosphate. The protein operates within metabolic intermediate biosynthesis; chorismate biosynthesis; chorismate from D-erythrose 4-phosphate and phosphoenolpyruvate: step 2/7. Functionally, catalyzes the conversion of 3-deoxy-D-arabino-heptulosonate 7-phosphate (DAHP) to dehydroquinate (DHQ). This chain is 3-dehydroquinate synthase, found in Staphylococcus aureus (strain Mu50 / ATCC 700699).